The following is a 238-amino-acid chain: Tetraspanin-4 (238 aa).

At 1-13 (MARACLQAVKYLM) the chain is on the cytoplasmic side. The chain crosses the membrane as a helical span at residues 14 to 34 (FAFNLLFWLGGCGVLGVGIWL). The Extracellular segment spans residues 35–55 (AATQGSFATLSSSFPSLSAAN). The chain crosses the membrane as a helical span at residues 56-76 (LLIITGAFVMAIGFVGCLGAI). At 77–85 (KENKCLLLT) the chain is on the cytoplasmic side. The helical transmembrane segment at 86 to 106 (FFLLLLLVFLLEATIAILFFA) threads the bilayer. The Extracellular portion of the chain corresponds to 107–201 (YTDKIDRYAQ…ETVKVWLQEN (95 aa)). 2 N-linked (GlcNAc...) asparagine glycosylation sites follow: Asn-152 and Asn-161. Residues 202-222 (LLAVGIFGLCTALVQILGLTF) form a helical membrane-spanning segment. At 223 to 238 (AMTMYCQVVKADTYCA) the chain is on the cytoplasmic side.

This sequence belongs to the tetraspanin (TM4SF) family. As to quaternary structure, forms a complex with integrins.

The protein resides in the membrane. The protein is Tetraspanin-4 (TSPAN4) of Pongo abelii (Sumatran orangutan).